The sequence spans 221 residues: Oxaloacetate tautomerase FAHD1, mitochondrial (221 aa).

Residues 1–24 (MAASRPLSRFWEWGKNIVCVGRNY) constitute a mitochondrion transit peptide. Residue Ser37 is modified to Phosphoserine. Positions 68, 70, and 99 each coordinate Mg(2+). At Lys110 the chain carries N6-acetyllysine. Position 112 is an N6-succinyllysine (Lys112).

Belongs to the FAH family. In terms of assembly, homodimer. It depends on Mg(2+) as a cofactor. Requires Mn(2+) as cofactor.

It is found in the mitochondrion. Its subcellular location is the cytoplasm. The protein resides in the cytosol. It carries out the reaction oxaloacetate = enol-oxaloacetate. It catalyses the reaction oxaloacetate + H(+) = pyruvate + CO2. The catalysed reaction is a 3-acylpyruvate + H2O = a carboxylate + pyruvate + H(+). The enzyme catalyses acetylpyruvate + H2O = acetate + pyruvate + H(+). It carries out the reaction 3-fumarylpyruvate + H2O = fumarate + pyruvate + H(+). Oxaloacetate decarboxylation is competitively inhibited by oxalate. Its function is as follows. Tautomerase that converts enol-oxaloacetate, a strong inhibitor of succinate dehydrogenase, to the physiological keto form of oxaloacetate. It is thereby required to maximize aerobic respiration efficiency by preventing succinate dehydrogenase inhibition. Also acts as a weak oxaloacetate decarboxylase (ODx), catalyzing the decarboxylation of oxaloacetate (OAA) to pyruvate and CO(2), and as such is likely a regulatory enzyme in the TCA cycle. Also displays acylpyruvase activity, being able to hydrolyze acetylpyruvate and fumarylpyruvate in vitro. In Bos taurus (Bovine), this protein is Oxaloacetate tautomerase FAHD1, mitochondrial.